Reading from the N-terminus, the 392-residue chain is Speckle-type POZ protein-like (392 aa).

One can recognise an MATH domain in the interval 31–161 (KFSYMWTINN…DDKLTLFCEV (131 aa)). The 68-residue stretch at 200-267 (TDCCFFVRGK…VYTGKAPNLD (68 aa)) folds into the BTB domain.

The protein belongs to the Tdpoz family. In terms of assembly, homodimer. Heterodimer with SPOP. Component of cullin-RING-based BCR (BTB-CUL3-RBX1) E3 ubiquitin-protein ligase complexes containing homodimeric SPOPL or the heterodimer formed by SPOP and SPOPL. Interacts with CUL3 and MACROH2A1.

The protein resides in the nucleus. Its pathway is protein modification; protein ubiquitination. Its function is as follows. Component of a cullin-RING-based BCR (BTB-CUL3-RBX1) E3 ubiquitin-protein ligase complex that mediates the ubiquitination and subsequent proteasomal degradation of target proteins, but with relatively low efficiency. Cullin-RING-based BCR (BTB-CUL3-RBX1) E3 ubiquitin-protein ligase complexes containing homodimeric SPOPL or the heterodimer formed by SPOP and SPOPL are less efficient than ubiquitin ligase complexes containing only SPOP. May function to down-regulate the activity of cullin-RING-based BCR (BTB-CUL3-RBX1) E3 ubiquitin-protein ligase complexes that contain SPOP. The chain is Speckle-type POZ protein-like (Spopl) from Mus musculus (Mouse).